We begin with the raw amino-acid sequence, 593 residues long: ESX-1 secretion system protein EccCb1 (593 aa).

FtsK domains are found at residues 66 to 260 (RQEV…NETQ) and 350 to 546 (QVPL…EKND). ATP is bound by residues 85–92 (GAPQTGKS) and 377–384 (GAPKSGKT).

As to quaternary structure, part of the ESX-1 / type VII secretion system (T7SS), which is composed of cytosolic and membrane components. The ESX-1 membrane complex is composed of EccB1, EccCa1, EccCb1, EccD1 and EccE1.

The protein localises to the cytoplasm. Functionally, part of the ESX-1 / type VII specialized secretion system (T7SS), which exports several proteins including EsxA and EsxB. Plays a role in DNA conjugation, in both donor and recipient strains. This is ESX-1 secretion system protein EccCb1 (eccCb1) from Mycolicibacterium smegmatis (strain MKD8) (Mycobacterium smegmatis).